The sequence spans 96 residues: RNA-binding protein Hfq (96 aa).

The 60-residue stretch at 9 to 68 folds into the Sm domain; that stretch reads DPYLNALRRERIPVSIYLVNGIKLQGQIESFDQFVILLKNTVNQMVYKHAISTVVPARSV. Residues 67–96 are disordered; it reads SVSHHNNSNNSNQQNYQQEQQTDSNVEKAE. The segment covering 72 to 87 has biased composition (low complexity); that stretch reads NNSNNSNQQNYQQEQQ.

It belongs to the Hfq family. Homohexamer.

In terms of biological role, RNA chaperone that binds small regulatory RNA (sRNAs) and mRNAs to facilitate mRNA translational regulation in response to envelope stress, environmental stress and changes in metabolite concentrations. Also binds with high specificity to tRNAs. This Pasteurella multocida (strain Pm70) protein is RNA-binding protein Hfq.